A 125-amino-acid chain; its full sequence is Fumarate reductase subunit D (125 aa).

3 consecutive transmembrane segments (helical) span residues 30 to 50 (FAMITPITVLVLGILVPLGVI), 63 to 83 (FATSIIGALFIIGTLALPMWH), and 105 to 125 (IACYAFAGLISALAVVFIFMI).

This sequence belongs to the FrdD family. In terms of assembly, part of an enzyme complex containing four subunits: a flavoprotein (FrdA), an iron-sulfur protein (FrdB), and two hydrophobic anchor proteins (FrdC and FrdD).

It is found in the cell inner membrane. Anchors the catalytic components of the fumarate reductase complex to the cell membrane, binds quinones. The chain is Fumarate reductase subunit D from Vibrio campbellii (strain ATCC BAA-1116).